The following is a 587-amino-acid chain: ATF/CREB activator 2 (587 aa).

4 disordered regions span residues 1–62, 123–144, 169–195, and 381–423; these read MFTG…SRSL, LRQQ…EEES, NLSQ…SNIA, and TGGE…IPGT. A compositionally biased stretch (basic and acidic residues) spans 16–29; sequence KQKDNNKRGIDDTS. Composition is skewed to low complexity over residues 39-57 and 123-134; these read SVSD…NNSA and LRQQQQQDQRQQ. A phosphoserine mark is found at S171 and S179. The span at 385–395 shows a compositional bias: basic and acidic residues; that stretch reads NRGKSALRESH. Residues 396–418 show a composition bias toward polar residues; sequence SNPSFTPKSQGSHLNLAANTQGN. Position 399 is a phosphoserine (S399). The bZIP domain occupies 425 to 488; that stretch reads AWKRARLLER…SKFKKFSKIH (64 aa). The interval 427–447 is basic motif; sequence KRARLLERNRIAASKCRQRKK. Residues 453–467 form a leucine-zipper region; it reads LQKEFNEIKDENRIL. Residues 552 to 587 are disordered; sequence SQRFGSDTDDDDIDLKPVEGGKDPDNQSLPNSEKIK. The residue at position 557 (S557) is a Phosphoserine. T559 is subject to Phosphothreonine. Over residues 565 to 576 the composition is skewed to basic and acidic residues; sequence DLKPVEGGKDPD. Over residues 577-587 the composition is skewed to polar residues; that stretch reads NQSLPNSEKIK.

This sequence belongs to the bZIP family.

Its subcellular location is the nucleus. In terms of biological role, transcriptional activator of promoters containing ATF/CREB sites. Can independently stimulate transcription through ATF/CREB sites. Important for a variety of biological functions including growth on non-optimal carbon sources. This Saccharomyces cerevisiae (strain ATCC 204508 / S288c) (Baker's yeast) protein is ATF/CREB activator 2 (CST6).